A 273-amino-acid chain; its full sequence is NADPH-dependent 7-cyano-7-deazaguanine reductase (273 aa).

81-83 (VES) provides a ligand contact to substrate. 83–84 (SK) is a binding site for NADPH. Cys-179 acts as the Thioimide intermediate in catalysis. Catalysis depends on Asp-186, which acts as the Proton donor. A substrate-binding site is contributed by 218 to 219 (AE). 247–248 (RG) serves as a coordination point for NADPH.

The protein belongs to the GTP cyclohydrolase I family. QueF type 2 subfamily. As to quaternary structure, homodimer.

The protein localises to the cytoplasm. The enzyme catalyses 7-aminomethyl-7-carbaguanine + 2 NADP(+) = 7-cyano-7-deazaguanine + 2 NADPH + 3 H(+). It functions in the pathway tRNA modification; tRNA-queuosine biosynthesis. Functionally, catalyzes the NADPH-dependent reduction of 7-cyano-7-deazaguanine (preQ0) to 7-aminomethyl-7-deazaguanine (preQ1). The polypeptide is NADPH-dependent 7-cyano-7-deazaguanine reductase (Rickettsia felis (strain ATCC VR-1525 / URRWXCal2) (Rickettsia azadi)).